A 341-amino-acid polypeptide reads, in one-letter code: Ribosomal RNA small subunit methyltransferase H (341 aa).

Residues 47–49 (GGY), D64, F91, D109, and Q116 contribute to the S-adenosyl-L-methionine site.

It belongs to the methyltransferase superfamily. RsmH family.

The protein localises to the cytoplasm. It catalyses the reaction cytidine(1402) in 16S rRNA + S-adenosyl-L-methionine = N(4)-methylcytidine(1402) in 16S rRNA + S-adenosyl-L-homocysteine + H(+). In terms of biological role, specifically methylates the N4 position of cytidine in position 1402 (C1402) of 16S rRNA. The polypeptide is Ribosomal RNA small subunit methyltransferase H (Rhizobium johnstonii (strain DSM 114642 / LMG 32736 / 3841) (Rhizobium leguminosarum bv. viciae)).